The sequence spans 258 residues: MMSENKLHVIDLHKRYGGHEVLKGVSLQARAGDVISIIGSSGSGKSTFLRCINFLEKPSEGAIIVNGQNINLVRDKDGQLKVADKNQLRLLRTRLTMVFQHFNLWSHMTVLENVMEAPIQVLGLSKHDARERALKYLAKVGIDERAQGKYPVHLSGGQQQRVSIARALAMEPDVLLFDEPTSALDPELVGEVLRIMQQLAEEGKTMVVVTHEMGFARHVSSHVIFLHQGKIEEEGDPEQVFGNPQSPRLQQFLKGSLK.

Positions Leu-7–Leu-253 constitute an ABC transporter domain. ATP is bound by residues Ser-41, Gly-42, Gly-44, Lys-45, Ser-46, and Thr-47.

The protein belongs to the ABC transporter superfamily. The HisPMQJ complex is composed of two ATP-binding proteins (HisP), two transmembrane proteins (HisM and HisQ) and a solute-binding protein (HisJ). The HisPMQ-ArgT complex is composed of two ATP-binding proteins (HisP), two transmembrane proteins (HisM and HisQ) and a solute-binding protein (ArgT).

The protein localises to the cell inner membrane. The enzyme catalyses a polar amino acid(out) + ATP + H2O = a polar amino acid(in) + ADP + phosphate + H(+). It catalyses the reaction L-histidine(out) + ATP + H2O = L-histidine(in) + ADP + phosphate + H(+). The catalysed reaction is L-lysine(out) + ATP + H2O = L-lysine(in) + ADP + phosphate + H(+). It carries out the reaction L-arginine(out) + ATP + H2O = L-arginine(in) + ADP + phosphate + H(+). The enzyme catalyses L-ornithine(out) + ATP + H2O = L-ornithine(in) + ADP + phosphate + H(+). Its activity is regulated as follows. Isolated, soluble HisP has a very low ATPase activity. ATPase activity is slightly increased in the presence of HisM and HisQ, and strongly increased when HisJ is also present. Part of the ABC transporter complex HisPMQJ involved in histidine transport. Is also part of the ABC transporter complex HisPMQ-ArgT involved in lysine/arginine/ornithine transport. Shows ATPase activity. Responsible for energy coupling to the transport system. In Salmonella typhimurium (strain LT2 / SGSC1412 / ATCC 700720), this protein is Histidine/lysine/arginine/ornithine transport ATP-binding protein HisP.